Reading from the N-terminus, the 885-residue chain is Isoleucine--tRNA ligase (885 aa).

A 'HIGH' region motif is present at residues 59–69; that stretch reads PYANGDLHIGH. Residue Glu-550 participates in L-isoleucyl-5'-AMP binding. The 'KMSKS' region motif lies at 591–595; sequence KMSKS. Lys-594 is a binding site for ATP. Positions 861, 864, 877, and 880 each coordinate Zn(2+).

Belongs to the class-I aminoacyl-tRNA synthetase family. IleS type 1 subfamily. In terms of assembly, monomer. Zn(2+) serves as cofactor.

Its subcellular location is the cytoplasm. The enzyme catalyses tRNA(Ile) + L-isoleucine + ATP = L-isoleucyl-tRNA(Ile) + AMP + diphosphate. Its function is as follows. Catalyzes the attachment of isoleucine to tRNA(Ile). As IleRS can inadvertently accommodate and process structurally similar amino acids such as valine, to avoid such errors it has two additional distinct tRNA(Ile)-dependent editing activities. One activity is designated as 'pretransfer' editing and involves the hydrolysis of activated Val-AMP. The other activity is designated 'posttransfer' editing and involves deacylation of mischarged Val-tRNA(Ile). The protein is Isoleucine--tRNA ligase of Mycoplasma mobile (strain ATCC 43663 / 163K / NCTC 11711) (Mesomycoplasma mobile).